Reading from the N-terminus, the 61-residue chain is Large ribosomal subunit protein uL30 (61 aa).

Belongs to the universal ribosomal protein uL30 family. Part of the 50S ribosomal subunit.

The sequence is that of Large ribosomal subunit protein uL30 from Lactobacillus delbrueckii subsp. bulgaricus (strain ATCC 11842 / DSM 20081 / BCRC 10696 / JCM 1002 / NBRC 13953 / NCIMB 11778 / NCTC 12712 / WDCM 00102 / Lb 14).